Reading from the N-terminus, the 136-residue chain is Polyadenylate-binding protein-interacting protein 2B (136 aa).

Polar residues predominate over residues 15–25 (NGSSVASTSPS). Disordered regions lie at residues 15–40 (NGSSVASTSPSVKCKEDQGLNGHEEK) and 107–136 (SVGDSHESEDILSKSNLNPDAKEFVPGVKY). The segment covering 27 to 40 (KCKEDQGLNGHEEK) has biased composition (basic and acidic residues).

This sequence belongs to the PAIP2 family. As to quaternary structure, interacts (via central acidic portion and C-terminus) with PABPC1 (via the second and third RRM domains and the C-terminus). Post-translationally, ubiquitinated in vitro. In terms of tissue distribution, expressed at very high levels in pancreas, at high levels in testis and at moderately high levels in brain, heart and lung (at protein level).

Functionally, inhibits translation of capped and polyadenylated mRNAs by displacing PABPC1 from the poly(A) tail. The polypeptide is Polyadenylate-binding protein-interacting protein 2B (Paip2b) (Mus musculus (Mouse)).